Here is a 422-residue protein sequence, read N- to C-terminus: Mannosylglycerate synthase (422 aa).

GDP-alpha-D-mannose contacts are provided by residues 7 to 11, Gln66, Lys77, Asp101, and 101 to 102; these read PFKEE and DS. Residues Arg132 and 137-140 each bind (R)-glycerate; that span reads AMIT. GDP-alpha-D-mannose-binding residues include Leu164, Asp193, and Tyr221.

Belongs to the glycosyltransferase 78 family.

It catalyses the reaction (R)-glycerate + GDP-alpha-D-mannose = (2R)-2-O-(alpha-D-mannosyl)-glycerate + GDP + H(+). The catalysed reaction is GDP-alpha-D-glucose + (R)-glycerate = (2R)-2-O-(alpha-D-glucopyranosyl)-glycerate + GDP + H(+). With respect to regulation, activity is not dependent on divalent cations, but it is enhanced by Mg(2+). In terms of biological role, involved in the biosynthesis of the compatible solute alpha-D-mannosyl-glycerate (MG). Catalyzes the condensation of GDP-alpha-D-mannose (GDP-Man) with D-glycerate to produce alpha-D-mannosyl-glycerate. Can also use GDP-alpha-D-glucose (GDP-Glc) as sugar donor to produce alpha-D-glucopyranosyl-glycerate (GG). In Selaginella moellendorffii (Spikemoss), this protein is Mannosylglycerate synthase.